A 701-amino-acid polypeptide reads, in one-letter code: Elongation factor G (701 aa).

The 283-residue stretch at 8-290 folds into the tr-type G domain; the sequence is SLYRNIGISA…AVVELLPAPT (283 aa). GTP contacts are provided by residues 17 to 24, 88 to 92, and 142 to 145; these read AHIDAGKT, DTPGH, and NKMD.

The protein belongs to the TRAFAC class translation factor GTPase superfamily. Classic translation factor GTPase family. EF-G/EF-2 subfamily.

Its subcellular location is the cytoplasm. Its function is as follows. Catalyzes the GTP-dependent ribosomal translocation step during translation elongation. During this step, the ribosome changes from the pre-translocational (PRE) to the post-translocational (POST) state as the newly formed A-site-bound peptidyl-tRNA and P-site-bound deacylated tRNA move to the P and E sites, respectively. Catalyzes the coordinated movement of the two tRNA molecules, the mRNA and conformational changes in the ribosome. This Neisseria meningitidis serogroup C (strain 053442) protein is Elongation factor G.